We begin with the raw amino-acid sequence, 499 residues long: Long chain base biosynthesis protein 2b (499 aa).

The helical transmembrane segment at 5–25 threads the bilayer; it reads VPYVTAATTLFSFGLIFGFGH. Position 322 is an N6-(pyridoxal phosphate)lysine (K322).

The protein belongs to the class-II pyridoxal-phosphate-dependent aminotransferase family. In terms of assembly, heterodimer with LCB1. Component of the serine palmitoyltransferase (SPT) complex, composed of LCB1 and LCB2. Requires pyridoxal 5'-phosphate as cofactor.

Its subcellular location is the endoplasmic reticulum membrane. The enzyme catalyses L-serine + hexadecanoyl-CoA + H(+) = 3-oxosphinganine + CO2 + CoA. It functions in the pathway lipid metabolism; sphingolipid metabolism. Serine palmitoyltransferase (SPT). The heterodimer formed with LCB1 constitutes the catalytic core. The chain is Long chain base biosynthesis protein 2b from Oryza sativa subsp. japonica (Rice).